The primary structure comprises 452 residues: Aspartyl/glutamyl-tRNA(Asn/Gln) amidotransferase subunit B (452 aa).

The protein belongs to the GatB/GatE family. GatB subfamily. As to quaternary structure, heterotrimer of A, B and C subunits.

The catalysed reaction is L-glutamyl-tRNA(Gln) + L-glutamine + ATP + H2O = L-glutaminyl-tRNA(Gln) + L-glutamate + ADP + phosphate + H(+). It catalyses the reaction L-aspartyl-tRNA(Asn) + L-glutamine + ATP + H2O = L-asparaginyl-tRNA(Asn) + L-glutamate + ADP + phosphate + 2 H(+). Its function is as follows. Allows the formation of correctly charged Asn-tRNA(Asn) or Gln-tRNA(Gln) through the transamidation of misacylated Asp-tRNA(Asn) or Glu-tRNA(Gln) in organisms which lack either or both of asparaginyl-tRNA or glutaminyl-tRNA synthetases. The reaction takes place in the presence of glutamine and ATP through an activated phospho-Asp-tRNA(Asn) or phospho-Glu-tRNA(Gln). This Methanosphaera stadtmanae (strain ATCC 43021 / DSM 3091 / JCM 11832 / MCB-3) protein is Aspartyl/glutamyl-tRNA(Asn/Gln) amidotransferase subunit B.